The sequence spans 111 residues: N-alpha-acetyltransferase 38-B, NatC auxiliary subunit (111 aa).

Residues 28–106 enclose the Sm domain; sequence TARHKLESLL…IVSIQVELET (79 aa).

Belongs to the snRNP Sm proteins family. In terms of assembly, component of the N-terminal acetyltransferase C (NatC) complex, which is composed of naa35, naa38 and naa30.

The protein resides in the cytoplasm. Functionally, auxillary component of the N-terminal acetyltransferase C (NatC) complex which catalyzes acetylation of N-terminal methionine residues. This chain is N-alpha-acetyltransferase 38-B, NatC auxiliary subunit (naa38-b), found in Xenopus laevis (African clawed frog).